A 178-amino-acid chain; its full sequence is Large ribosomal subunit protein uL6 (178 aa).

Belongs to the universal ribosomal protein uL6 family. In terms of assembly, part of the 50S ribosomal subunit.

In terms of biological role, this protein binds to the 23S rRNA, and is important in its secondary structure. It is located near the subunit interface in the base of the L7/L12 stalk, and near the tRNA binding site of the peptidyltransferase center. The chain is Large ribosomal subunit protein uL6 from Streptococcus agalactiae serotype V (strain ATCC BAA-611 / 2603 V/R).